Reading from the N-terminus, the 66-residue chain is Stress-associated endoplasmic reticulum protein 1 (66 aa).

Residues 1–31 (MVAKQRIRMANEKHSKNITQRGNVAKTSRNA) form a disordered region. A compositionally biased stretch (polar residues) spans 17–30 (NITQRGNVAKTSRN). The chain crosses the membrane as a helical span at residues 39–59 (GPWLLALFIFVVCGSAIFQII).

Belongs to the RAMP4 family. As to quaternary structure, interacts with SEC61B, SEC61A1 and the SEC61 complex. Interacts with CANX.

The protein resides in the membrane. It localises to the endoplasmic reticulum membrane. Its function is as follows. Interacts with target proteins during their translocation into the lumen of the endoplasmic reticulum. Protects unfolded target proteins against degradation during ER stress. May facilitate glycosylation of target proteins after termination of ER stress. May modulate the use of N-glycosylation sites on target proteins. In Bos taurus (Bovine), this protein is Stress-associated endoplasmic reticulum protein 1 (SERP1).